The sequence spans 358 residues: Heat-inducible transcription repressor HrcA (358 aa).

The protein belongs to the HrcA family.

Functionally, negative regulator of class I heat shock genes (grpE-dnaK-dnaJ and groELS operons). Prevents heat-shock induction of these operons. The polypeptide is Heat-inducible transcription repressor HrcA (Caulobacter vibrioides (strain NA1000 / CB15N) (Caulobacter crescentus)).